Reading from the N-terminus, the 456-residue chain is MLNVVILAAGLGKRMQSDLPKVLHSLAGKPMLEHVLDSASQLEPGRIVVVVGHGADRVRGAYEGRAGLSFALQQPQQGTGHAVQQAVPLLQEDGKDDVTLVLYGDVPLVQPDTLRRLLQARGQGAAVLTELLDDATGYGRIVRNEQGQVQRIVEHKDASEAERAIREVNTGILAAPTGRLKDWLSRIDNNNAQGEYYLTDVVGLAVADGVPVGAAQPSAGWETLGVNSRVQQAELERRWQQEQARRQLEAGVTLADPARFDVRGTLTCGRDVFIDVGCVFEGKVELADGVRVGPHCVLRDVSVGAGTHIDAYSHVQQATVGRDARIGPYARLRPGASLGDRTHVGNFVEIKNSVLDADSKANHLAYIGDADIGARVNVGAGTITCNYDGANKHRTIIEDDAFIGSDTQLVAPVRVGRGATLGAGTTLTRDAPAGQLTVSRARQTTIEGWQRPQKKS.

A pyrophosphorylase region spans residues 1–229; it reads MLNVVILAAG…GWETLGVNSR (229 aa). Residues 7–10, lysine 21, glutamine 73, 78–79, 103–105, glycine 139, glutamate 154, asparagine 169, and asparagine 227 contribute to the UDP-N-acetyl-alpha-D-glucosamine site; these read LAAG, GT, and YGD. Position 105 (aspartate 105) interacts with Mg(2+). Asparagine 227 contributes to the Mg(2+) binding site. The segment at 230-250 is linker; that stretch reads VQQAELERRWQQEQARRQLEA. Residues 251-456 are N-acetyltransferase; sequence GVTLADPARF…EGWQRPQKKS (206 aa). The UDP-N-acetyl-alpha-D-glucosamine site is built by arginine 333 and lysine 351. Histidine 363 acts as the Proton acceptor in catalysis. UDP-N-acetyl-alpha-D-glucosamine contacts are provided by tyrosine 366 and asparagine 377. Acetyl-CoA contacts are provided by residues alanine 380, 386 to 387, serine 405, alanine 423, and arginine 440; that span reads NY.

In the N-terminal section; belongs to the N-acetylglucosamine-1-phosphate uridyltransferase family. This sequence in the C-terminal section; belongs to the transferase hexapeptide repeat family. As to quaternary structure, homotrimer. Requires Mg(2+) as cofactor.

The protein localises to the cytoplasm. It catalyses the reaction alpha-D-glucosamine 1-phosphate + acetyl-CoA = N-acetyl-alpha-D-glucosamine 1-phosphate + CoA + H(+). The catalysed reaction is N-acetyl-alpha-D-glucosamine 1-phosphate + UTP + H(+) = UDP-N-acetyl-alpha-D-glucosamine + diphosphate. It participates in nucleotide-sugar biosynthesis; UDP-N-acetyl-alpha-D-glucosamine biosynthesis; N-acetyl-alpha-D-glucosamine 1-phosphate from alpha-D-glucosamine 6-phosphate (route II): step 2/2. It functions in the pathway nucleotide-sugar biosynthesis; UDP-N-acetyl-alpha-D-glucosamine biosynthesis; UDP-N-acetyl-alpha-D-glucosamine from N-acetyl-alpha-D-glucosamine 1-phosphate: step 1/1. Its pathway is bacterial outer membrane biogenesis; LPS lipid A biosynthesis. Its function is as follows. Catalyzes the last two sequential reactions in the de novo biosynthetic pathway for UDP-N-acetylglucosamine (UDP-GlcNAc). The C-terminal domain catalyzes the transfer of acetyl group from acetyl coenzyme A to glucosamine-1-phosphate (GlcN-1-P) to produce N-acetylglucosamine-1-phosphate (GlcNAc-1-P), which is converted into UDP-GlcNAc by the transfer of uridine 5-monophosphate (from uridine 5-triphosphate), a reaction catalyzed by the N-terminal domain. This Bordetella petrii (strain ATCC BAA-461 / DSM 12804 / CCUG 43448) protein is Bifunctional protein GlmU.